Consider the following 678-residue polypeptide: Putative cyclic nucleotide-gated ion channel 15 (678 aa).

The Cytoplasmic portion of the chain corresponds to 1–81 (MGYGNSRSVR…RGQTIRRWNK (81 aa)). A helical transmembrane segment spans residues 82–102 (IFLIACLVSLFVDPLFFFLPV). Residues 103 to 115 (MRNEACITIGVRL) lie on the Extracellular side of the membrane. A helical membrane pass occupies residues 116–136 (EVVLTLIRSLADAFYIAQILI). At 137–170 (RFRTAYIAPPSRVFGRGELVIDSRKIAWRYLHKS) the chain is on the cytoplasmic side. Residues 171–191 (FWIHLVAALPLPQVLIWIIIP) traverse the membrane as a helical segment. At 192-203 (NLRGSPMTNTKN) the chain is on the extracellular side. Residues 204–224 (VLRFIIIFQYVPRMFLIFPLS) traverse the membrane as a helical segment. Over 225–245 (RQIIKATGVVTETAWAGAAYN) the chain is Cytoplasmic. A helical transmembrane segment spans residues 246–266 (LMLYMLASHVLGACWYLLAVE). The Extracellular segment spans residues 267–364 (RQEACWRHAC…GQNLATSTYA (98 aa)). Residues 365–385 (GEILFAIIIATLGLVLFALLI) traverse the membrane as a helical segment. The Cytoplasmic portion of the chain corresponds to 386 to 678 (GNMQTYLQST…KPVEPDFSSE (293 aa)). Residues 471–595 (LFDQ…TKQL) and E542 contribute to the a nucleoside 3',5'-cyclic phosphate site. The tract at residues 587–602 (FRRLHTKQLRHKFRFY) is calmodulin-binding. An IQ domain is found at 607–638 (RTWAACFIQAAWRRHRKRKYKTELRAKEEFHY). Residues 656 to 668 (RSGSDSGMMSSIQ) are compositionally biased toward polar residues. Residues 656–678 (RSGSDSGMMSSIQKPVEPDFSSE) are disordered.

It belongs to the cyclic nucleotide-gated cation channel (TC 1.A.1.5) family. As to quaternary structure, homotetramer or heterotetramer.

It localises to the cell membrane. Functionally, putative cyclic nucleotide-gated ion channel. The protein is Putative cyclic nucleotide-gated ion channel 15 (CNGC15) of Arabidopsis thaliana (Mouse-ear cress).